We begin with the raw amino-acid sequence, 172 residues long: Small ribosomal subunit protein uS5 (172 aa).

An S5 DRBM domain is found at 16-79 (LKEKLVHINR…EDGKKNVIKV (64 aa)).

This sequence belongs to the universal ribosomal protein uS5 family. As to quaternary structure, part of the 30S ribosomal subunit. Contacts proteins S4 and S8.

With S4 and S12 plays an important role in translational accuracy. In terms of biological role, located at the back of the 30S subunit body where it stabilizes the conformation of the head with respect to the body. The sequence is that of Small ribosomal subunit protein uS5 from Chlorobium phaeobacteroides (strain DSM 266 / SMG 266 / 2430).